A 130-amino-acid polypeptide reads, in one-letter code: Holo-[acyl-carrier-protein] synthase (130 aa).

Mg(2+) contacts are provided by D8 and E62.

It belongs to the P-Pant transferase superfamily. AcpS family. Mg(2+) serves as cofactor.

It is found in the cytoplasm. It catalyses the reaction apo-[ACP] + CoA = holo-[ACP] + adenosine 3',5'-bisphosphate + H(+). Transfers the 4'-phosphopantetheine moiety from coenzyme A to a Ser of acyl-carrier-protein. The protein is Holo-[acyl-carrier-protein] synthase of Polynucleobacter asymbioticus (strain DSM 18221 / CIP 109841 / QLW-P1DMWA-1) (Polynucleobacter necessarius subsp. asymbioticus).